The following is a 53-amino-acid chain: uncharacterized protein (53 aa).

The helical transmembrane segment at 18 to 38 (FLFFIFYFLFFFIFFTVFGNL) threads the bilayer.

The protein resides in the membrane. This is an uncharacterized protein from Dictyostelium discoideum (Social amoeba).